The sequence spans 370 residues: uncharacterized protein (370 aa).

Lys-207 carries the N6-(pyridoxal phosphate)lysine modification.

Belongs to the class-V pyridoxal-phosphate-dependent aminotransferase family. The cofactor is pyridoxal 5'-phosphate.

This is an uncharacterized protein from Bacillus subtilis (strain 168).